A 158-amino-acid chain; its full sequence is Egg cell-secreted protein 1.1 (158 aa).

The N-terminal stretch at 1–27 is a signal peptide; it reads MASKSSFMATFNIVTLMLMVASSTVTA. Asn122 is a glycosylation site (N-linked (GlcNAc...) asparagine).

Belongs to the plant egg cell-secreted peptide family. Restricted to female reproductive tissues, specifically accumulating in storage vesicles of the unfertilized egg cell.

The protein localises to the cytoplasmic vesicle. The protein resides in the secreted. Involved in the regulation of gamete interactions during the double fertilization and to prevent multiple-pollen tube attraction; mediates the redistribution of the gamete fusogen HAP2/GCS1 to the cell surface after secretion upon sperm arrival. This Arabidopsis thaliana (Mouse-ear cress) protein is Egg cell-secreted protein 1.1 (EC1.1).